The following is a 333-amino-acid chain: Trimethylamine N-oxide-binding protein (333 aa).

An N-terminal signal peptide occupies residues 1–42; it reads MRLFREIAANDPGPTGRMKNMKTFTTALATGVLALCPLAALA. 5 residues coordinate trimethylamine N-oxide: Trp-55, Trp-102, Glu-131, Trp-177, and Trp-222. Residues Pro-249, Val-251, Asn-254, Ala-257, and Asp-260 each coordinate Ca(2+).

The complex is probably composed of two ATP-binding proteins (TmoW), two transmembrane proteins (TmoV) and a solute-binding protein (TmoX). Monomer in solution, but forms homodimers in crystals.

Its subcellular location is the periplasm. Binds a Ca(2+) ion, which has little effect on either the binding affinity or the secondary structure, but plays an important role in maintaining the stability of TmoX. It may modulate the protein stability in response to biological needs and environmental changes. Thermostability is dramatically decreased when Ca(2+) is removed by EDTA. Functionally, part of the ABC transporter complex TmoXWV involved in trimethylamine N-oxide (TMAO) import. Is specific for TMAO and essential for TMAO metabolism. Binds TMAO with high affinity. In vitro, also presents a high binding affinity for choline, however this transporter seems specific for TMAO and the choline-binding affinity presented by recombinant TmoX may not make physiological sense. The polypeptide is Trimethylamine N-oxide-binding protein (Ruegeria pomeroyi (strain ATCC 700808 / DSM 15171 / DSS-3) (Silicibacter pomeroyi)).